Reading from the N-terminus, the 121-residue chain is Securin (121 aa).

Residues 1 to 24 (RATEKSVKTNGPLKQKQTTFSAKK) form a disordered region. 2 consecutive short sequence motifs (TEK-box) follow at residues 3-5 (TEK) and 26-28 (TEK). A disordered region spans residues 93–121 (LGPPSPLNMPSPPWESDVLQSPSSILSTL). Residues 95–105 (PPSPLNMPSPP) carry the SH3-binding motif. The span at 95–105 (PPSPLNMPSPP) shows a compositional bias: pro residues. At Ser-97 the chain carries Phosphoserine; by CDK1. Polar residues predominate over residues 110–121 (VLQSPSSILSTL).

This sequence belongs to the securin family. As to quaternary structure, interacts with the caspase-like ESPL1, and prevents its protease activity probably by covering its active site. Interacts with p53/TP53 and blocks its activity probably by blocking its binding to DNA. Interacts with the Ku 70 kDa subunit of ds-DNA kinase. Interacts with PTTG1IP. Interacts with RPS10 and DNAJA1. In terms of processing, phosphorylated by CDK1 during mitosis. Post-translationally, phosphorylated in vitro by ds-DNA kinase. Ubiquitinated through 'Lys-11' linkage of ubiquitin moieties by the anaphase promoting complex (APC) at the onset of anaphase, conducting to its degradation. 'Lys-11'-linked ubiquitination is mediated by the E2 ligase UBE2C/UBCH10.

The protein localises to the cytoplasm. Its subcellular location is the nucleus. In terms of biological role, regulatory protein, which plays a central role in chromosome stability, in the p53/TP53 pathway, and DNA repair. Probably acts by blocking the action of key proteins. During the mitosis, it blocks Separase/ESPL1 function, preventing the proteolysis of the cohesin complex and the subsequent segregation of the chromosomes. At the onset of anaphase, it is ubiquitinated, conducting to its destruction and to the liberation of ESPL1. Its function is however not limited to a blocking activity, since it is required to activate ESPL1. Negatively regulates the transcriptional activity and related apoptosis activity of p53/TP53. The negative regulation of p53/TP53 may explain the strong transforming capability of the protein when it is overexpressed. May also play a role in DNA repair via its interaction with Ku, possibly by connecting DNA damage-response pathways with sister chromatid separation. This is Securin (PTTG1) from Sus scrofa (Pig).